Consider the following 92-residue polypeptide: FMRFamide-like neuropeptides 16 (92 aa).

Residues 1-24 form the signal peptide; sequence MNFSGFEFSSIVAFFLLILQLSTA. The propeptide occupies 25 to 55; it reads AVLPADYAYGVADEMSALPDSGSLFAEQRPS. Phenylalanine amide occurs at positions 64, 74, and 84. Positions 87-92 are excised as a propeptide; that stretch reads SAPFEQ.

It belongs to the FARP (FMRFamide related peptide) family. Each flp gene is expressed in a distinct set of neurons.

It localises to the secreted. In terms of biological role, FMRFamides and FMRFamide-like peptides are neuropeptides. AQTFVRF-amide inhibits the activity of dissected pharyngeal myogenic muscle system. The chain is FMRFamide-like neuropeptides 16 from Caenorhabditis elegans.